The primary structure comprises 414 residues: Glycogen synthase (414 aa).

It belongs to the glycosyltransferase group 1 family.

The enzyme catalyses [(1-&gt;4)-alpha-D-glucosyl](n) + UDP-alpha-D-glucose = [(1-&gt;4)-alpha-D-glucosyl](n+1) + UDP + H(+). The protein operates within glycan biosynthesis; glycogen biosynthesis. Functionally, glucosyltransferase that uses UDP-glucose as the sugar donor to elongate alpha-(1-&gt;4)-glucans. Is involved in the biosynthesis of both 6-O-methylglucosyl lipopolysaccharides (MGLP) and glycogen. May also use ADP-glucose as substrate. This chain is Glycogen synthase, found in Mycobacterium tuberculosis (strain CDC 1551 / Oshkosh).